The sequence spans 282 residues: Pantothenate synthetase (282 aa).

32–39 (MGALHEGH) is a binding site for ATP. His39 acts as the Proton donor in catalysis. (R)-pantoate is bound at residue Gln63. Gln63 contacts beta-alanine. 149–152 (GEKD) is a binding site for ATP. Position 155 (Gln155) interacts with (R)-pantoate. ATP contacts are provided by residues Val178 and 186-189 (LSSR).

The protein belongs to the pantothenate synthetase family. In terms of assembly, homodimer.

It is found in the cytoplasm. The enzyme catalyses (R)-pantoate + beta-alanine + ATP = (R)-pantothenate + AMP + diphosphate + H(+). It functions in the pathway cofactor biosynthesis; (R)-pantothenate biosynthesis; (R)-pantothenate from (R)-pantoate and beta-alanine: step 1/1. Catalyzes the condensation of pantoate with beta-alanine in an ATP-dependent reaction via a pantoyl-adenylate intermediate. This is Pantothenate synthetase from Paracoccus denitrificans (strain Pd 1222).